A 508-amino-acid chain; its full sequence is MSQEKYIMAIDQGTTSSRAIIFNQKGEKVSSSQKEFPQIFPHAGWVEHNANQIWNSVQSVIAGAFIESSIKPSQIEAIGITNQRETTVIWDKKTGVPIYNAIVWQSRQTAPIAEQLKQDGHTKMIHEKTGLVIDAYFSATKIRWILDHVPGAQERAEKGELLFGTIDTWLVWKLTDGAVHVTDYSNAARTMLYNIKDLTWDDEILELLNIPKDMLPEVKSNSEIYGKTAAFHFYGGEVPISGMAGDQQAALFGQLAFEPGMVKNTYGTGSFIIMNTGDEMQLSSNNLLTTIGYGINGKVHYALEGSIFIAGSAIQWLRDGLKMIETSPESEQFALASTSDDEVYVVPAFTGLGAPYWDSNARGSVFGLTRGTSKEDFVKATLQSIAYQVRDVIDTMQVDSGIDIQQLRVDGGAAMNNMLMQFQADILGIDIARAKNLETTALGAAFLAGLAVGYWEDMDALKELNATGQLFKASMNESRKEKLYKGWKRAVKATQVFTQEEDADDDAK.

Thr14 is a binding site for ADP. ATP-binding residues include Thr14, Thr15, and Ser16. Residue Thr14 coordinates sn-glycerol 3-phosphate. ADP is bound at residue Arg18. Sn-glycerol 3-phosphate is bound by residues Arg84, Glu85, and Tyr136. Glycerol is bound by residues Arg84, Glu85, and Tyr136. His232 is subject to Phosphohistidine; by HPr. Asp246 contributes to the sn-glycerol 3-phosphate binding site. Positions 246 and 247 each coordinate glycerol. 2 residues coordinate ADP: Thr268 and Gly311. Thr268, Gly311, Gln315, and Gly412 together coordinate ATP. ADP is bound by residues Gly412 and Asn416.

It belongs to the FGGY kinase family. As to quaternary structure, homotetramer and homodimer (in equilibrium). Post-translationally, the phosphoenolpyruvate-dependent sugar phosphotransferase system (PTS), including enzyme I, and histidine-containing protein (HPr) are required for the phosphorylation, which leads to the activation of the enzyme.

It carries out the reaction glycerol + ATP = sn-glycerol 3-phosphate + ADP + H(+). It functions in the pathway polyol metabolism; glycerol degradation via glycerol kinase pathway; sn-glycerol 3-phosphate from glycerol: step 1/1. Its activity is regulated as follows. Activated by phosphorylation and inhibited by fructose 1,6-bisphosphate (FBP). In terms of biological role, key enzyme in the regulation of glycerol uptake and metabolism. Catalyzes the phosphorylation of glycerol to yield sn-glycerol 3-phosphate. The polypeptide is Glycerol kinase (Streptococcus pyogenes serotype M3 (strain ATCC BAA-595 / MGAS315)).